Consider the following 1033-residue polypeptide: Isoleucine--tRNA ligase 2 (1033 aa).

The 'HIGH' region motif lies at 47 to 57; it reads PTANGLPHVGH. The short motif at 590 to 594 is the 'KMSKS' region element; that stretch reads KMSKS. Lys593 is a binding site for ATP.

This sequence belongs to the class-I aminoacyl-tRNA synthetase family. IleS type 2 subfamily. Monomer. It depends on Zn(2+) as a cofactor.

The protein resides in the cytoplasm. The catalysed reaction is tRNA(Ile) + L-isoleucine + ATP = L-isoleucyl-tRNA(Ile) + AMP + diphosphate. Its function is as follows. Catalyzes the attachment of isoleucine to tRNA(Ile). As IleRS can inadvertently accommodate and process structurally similar amino acids such as valine, to avoid such errors it has two additional distinct tRNA(Ile)-dependent editing activities. One activity is designated as 'pretransfer' editing and involves the hydrolysis of activated Val-AMP. The other activity is designated 'posttransfer' editing and involves deacylation of mischarged Val-tRNA(Ile). The sequence is that of Isoleucine--tRNA ligase 2 from Bacillus thuringiensis subsp. konkukian (strain 97-27).